We begin with the raw amino-acid sequence, 316 residues long: 4-hydroxy-3-methylbut-2-enyl diphosphate reductase (316 aa).

Cysteine 12 is a binding site for [4Fe-4S] cluster. Residues histidine 43 and histidine 81 each contribute to the (2E)-4-hydroxy-3-methylbut-2-enyl diphosphate site. Dimethylallyl diphosphate contacts are provided by histidine 43 and histidine 81. 2 residues coordinate isopentenyl diphosphate: histidine 43 and histidine 81. Position 103 (cysteine 103) interacts with [4Fe-4S] cluster. Histidine 131 serves as a coordination point for (2E)-4-hydroxy-3-methylbut-2-enyl diphosphate. Histidine 131 is a binding site for dimethylallyl diphosphate. Residue histidine 131 coordinates isopentenyl diphosphate. The active-site Proton donor is glutamate 133. Threonine 170 is a binding site for (2E)-4-hydroxy-3-methylbut-2-enyl diphosphate. Residue cysteine 198 participates in [4Fe-4S] cluster binding. (2E)-4-hydroxy-3-methylbut-2-enyl diphosphate is bound by residues serine 226, asparagine 228, and serine 271. Positions 226, 228, and 271 each coordinate dimethylallyl diphosphate. Serine 226, asparagine 228, and serine 271 together coordinate isopentenyl diphosphate.

The protein belongs to the IspH family. It depends on [4Fe-4S] cluster as a cofactor.

It catalyses the reaction isopentenyl diphosphate + 2 oxidized [2Fe-2S]-[ferredoxin] + H2O = (2E)-4-hydroxy-3-methylbut-2-enyl diphosphate + 2 reduced [2Fe-2S]-[ferredoxin] + 2 H(+). The enzyme catalyses dimethylallyl diphosphate + 2 oxidized [2Fe-2S]-[ferredoxin] + H2O = (2E)-4-hydroxy-3-methylbut-2-enyl diphosphate + 2 reduced [2Fe-2S]-[ferredoxin] + 2 H(+). It functions in the pathway isoprenoid biosynthesis; dimethylallyl diphosphate biosynthesis; dimethylallyl diphosphate from (2E)-4-hydroxy-3-methylbutenyl diphosphate: step 1/1. The protein operates within isoprenoid biosynthesis; isopentenyl diphosphate biosynthesis via DXP pathway; isopentenyl diphosphate from 1-deoxy-D-xylulose 5-phosphate: step 6/6. Catalyzes the conversion of 1-hydroxy-2-methyl-2-(E)-butenyl 4-diphosphate (HMBPP) into a mixture of isopentenyl diphosphate (IPP) and dimethylallyl diphosphate (DMAPP). Acts in the terminal step of the DOXP/MEP pathway for isoprenoid precursor biosynthesis. The polypeptide is 4-hydroxy-3-methylbut-2-enyl diphosphate reductase (Geobacillus kaustophilus (strain HTA426)).